Reading from the N-terminus, the 410-residue chain is Cysteine desulfurase IscS (410 aa).

Pyridoxal 5'-phosphate is bound by residues 80 to 81 (AT), asparagine 160, glutamine 188, and 208 to 210 (SGH). Lysine 211 carries the N6-(pyridoxal phosphate)lysine modification. Position 248 (threonine 248) interacts with pyridoxal 5'-phosphate. Cysteine 334 (cysteine persulfide intermediate) is an active-site residue. A [2Fe-2S] cluster-binding site is contributed by cysteine 334.

This sequence belongs to the class-V pyridoxal-phosphate-dependent aminotransferase family. NifS/IscS subfamily. In terms of assembly, homodimer. Forms a heterotetramer with IscU, interacts with other sulfur acceptors. It depends on pyridoxal 5'-phosphate as a cofactor.

The protein resides in the cytoplasm. It carries out the reaction (sulfur carrier)-H + L-cysteine = (sulfur carrier)-SH + L-alanine. Its pathway is cofactor biosynthesis; iron-sulfur cluster biosynthesis. Functionally, master enzyme that delivers sulfur to a number of partners involved in Fe-S cluster assembly, tRNA modification or cofactor biosynthesis. Catalyzes the removal of elemental sulfur atoms from cysteine to produce alanine. Functions as a sulfur delivery protein for Fe-S cluster synthesis onto IscU, an Fe-S scaffold assembly protein, as well as other S acceptor proteins. This Rickettsia conorii (strain ATCC VR-613 / Malish 7) protein is Cysteine desulfurase IscS.